Here is a 523-residue protein sequence, read N- to C-terminus: Putative glycerol-3-phosphate transporter 1 (523 aa).

12 helical membrane-spanning segments follow: residues 29–49 (LSYSAYQAIVLIVTFLAYASY), 102–122 (VLLGEIDVAFLAVYAFGMYFA), 133–153 (IFLTVGMIGTGLFTSLFGVGY), 163–183 (FLIMQMLAGLFQSSGWPSVVA), 196–216 (LIMGIWNAHTSVGNITGSLIA), 228–248 (FVVPGVIIVVIGLVNYAFLPV), 306–326 (FALCLFFAKLVAYTFLYWLPF), 344–364 (GNLSTMFDVGGVVGGIMAGYI), 368–388 (IGARAITAASFMYCSIPALFF), 402–422 (SLMFLTGMLVNGPYALITTAV), 444–464 (AIIDGTGSVGAAVGPLLTGYI), and 468–488 (GSWTAVFTMLMGAAFVAGLLL).

The protein belongs to the major facilitator superfamily. Organophosphate:Pi antiporter (OPA) (TC 2.A.1.4) family.

It localises to the membrane. The chain is Putative glycerol-3-phosphate transporter 1 from Arabidopsis thaliana (Mouse-ear cress).